The primary structure comprises 511 residues: Maturase K (511 aa).

This sequence belongs to the intron maturase 2 family. MatK subfamily.

It localises to the plastid. The protein localises to the chloroplast. Functionally, usually encoded in the trnK tRNA gene intron. Probably assists in splicing its own and other chloroplast group II introns. This Psathyrostachys juncea (Russian wildrye) protein is Maturase K.